The following is a 716-amino-acid chain: Fatty acid oxidation complex subunit alpha (716 aa).

Residues 1 to 189 (MIYQSPTIQV…KVGAVDAVVA (189 aa)) form an enoyl-CoA hydratase/isomerase region. Aspartate 296 contributes to the substrate binding site. The tract at residues 311–716 (KEVNNAAVLG…AANNGSYYQA (406 aa)) is 3-hydroxyacyl-CoA dehydrogenase. Residues methionine 324, aspartate 343, 400-402 (VVE), lysine 407, and serine 429 contribute to the NAD(+) site. The active-site For 3-hydroxyacyl-CoA dehydrogenase activity is the histidine 450. An NAD(+)-binding site is contributed by asparagine 453. Residues asparagine 500 and tyrosine 660 each contribute to the substrate site.

In the N-terminal section; belongs to the enoyl-CoA hydratase/isomerase family. This sequence in the C-terminal section; belongs to the 3-hydroxyacyl-CoA dehydrogenase family. As to quaternary structure, heterotetramer of two alpha chains (FadB) and two beta chains (FadA).

The catalysed reaction is a (3S)-3-hydroxyacyl-CoA + NAD(+) = a 3-oxoacyl-CoA + NADH + H(+). The enzyme catalyses a (3S)-3-hydroxyacyl-CoA = a (2E)-enoyl-CoA + H2O. It catalyses the reaction a 4-saturated-(3S)-3-hydroxyacyl-CoA = a (3E)-enoyl-CoA + H2O. It carries out the reaction (3S)-3-hydroxybutanoyl-CoA = (3R)-3-hydroxybutanoyl-CoA. The catalysed reaction is a (3Z)-enoyl-CoA = a 4-saturated (2E)-enoyl-CoA. The enzyme catalyses a (3E)-enoyl-CoA = a 4-saturated (2E)-enoyl-CoA. Its pathway is lipid metabolism; fatty acid beta-oxidation. Involved in the aerobic and anaerobic degradation of long-chain fatty acids via beta-oxidation cycle. Catalyzes the formation of 3-oxoacyl-CoA from enoyl-CoA via L-3-hydroxyacyl-CoA. It can also use D-3-hydroxyacyl-CoA and cis-3-enoyl-CoA as substrate. The sequence is that of Fatty acid oxidation complex subunit alpha from Shewanella baltica (strain OS223).